Consider the following 856-residue polypeptide: Envelope glycoprotein GP350 (856 aa).

Residues methionine 1 to serine 809 are Virion surface-facing. N-linked (GlcNAc...) asparagine; by host glycans are attached at residues asparagine 47, asparagine 87, asparagine 114, asparagine 166, asparagine 169, asparagine 195, asparagine 229, asparagine 277, asparagine 318, asparagine 328, asparagine 345, asparagine 356, asparagine 378, asparagine 386, asparagine 411, asparagine 435, asparagine 443, asparagine 457, asparagine 497, asparagine 519, asparagine 533, asparagine 554, asparagine 568, asparagine 582, asparagine 585, asparagine 603, and asparagine 614. The interval phenylalanine 421–proline 779 is disordered. The segment covering serine 427 to threonine 437 has biased composition (low complexity). A compositionally biased stretch (polar residues) spans proline 442 to valine 488. The segment covering threonine 507 to threonine 570 has biased composition (low complexity). Residues glycine 575–threonine 616 are compositionally biased toward polar residues. Low complexity predominate over residues serine 617–serine 631. A glycan (N-linked (GlcNAc...) asparagine; by host) is linked at asparagine 650. The span at valine 654–proline 669 shows a compositional bias: low complexity. The span at glycine 674–lysine 690 shows a compositional bias: polar residues. Residues asparagine 684, asparagine 695, asparagine 704, and asparagine 729 are each glycosylated (N-linked (GlcNAc...) asparagine; by host). The span at lysine 703 to serine 730 shows a compositional bias: polar residues. Residues threonine 731–glycine 741 show a composition bias toward low complexity. The span at arginine 743–glutamate 776 shows a compositional bias: polar residues. N-linked (GlcNAc...) asparagine; by host glycosylation is found at asparagine 764 and asparagine 807. A helical transmembrane segment spans residues methionine 810–alanine 830. Over aspartate 831–valine 856 the chain is Intravirion.

Belongs to the Epstein-Barr GP350 family. Interacts with host CR2. Post-translationally, extensively glycosylated.

It is found in the virion membrane. The protein localises to the host membrane. Functionally, initiates virion attachment to host B-lymphocyte cell, leading to virus entry. Acts by binding to host CR2 at the surface of B-lymphocytes, facilitating the binding of viral glycoprotein gp42 to HLA class II molecules. Attachment triggers virion-host membrane fusion and invasion of the host cell. This is Envelope glycoprotein GP350 from Homo sapiens (Human).